Here is a 286-residue protein sequence, read N- to C-terminus: 2-hydroxy-6-oxo-6-phenylhexa-2,4-dienoate hydrolase (286 aa).

Residues 42-43 (GG), N51, N111, S180, and R190 contribute to the substrate site. The Proton acceptor role is filled by H265. W266 contacts substrate.

The protein belongs to the AB hydrolase superfamily. BphD family. As to quaternary structure, homodimer.

The catalysed reaction is 2,6-dioxo-6-phenylhexa-3-enoate + H2O = 2-oxopent-4-enoate + benzoate + H(+). The protein operates within xenobiotic degradation; biphenyl degradation; 2-hydroxy-2,4-pentadienoate and benzoate from biphenyl: step 4/4. Its activity is regulated as follows. Inhibited by 3-Cl HOPDA. Its function is as follows. Catalyzes an unusual C-C bond hydrolysis of 2-hydroxy-6-oxo-6-phenylhexa-2,4-dienoic acid (HOPDA) to produce benzoic acid and 2-hydroxy-2,4-pentadienoic acid (HPD). This is 2-hydroxy-6-oxo-6-phenylhexa-2,4-dienoate hydrolase (bphD) from Paraburkholderia xenovorans (strain LB400).